The following is a 257-amino-acid chain: Thiazole synthase (257 aa).

The active-site Schiff-base intermediate with DXP is Lys98. Residues Gly159, 185–186 (AG), and 207–208 (NT) each bind 1-deoxy-D-xylulose 5-phosphate.

The protein belongs to the ThiG family. As to quaternary structure, homotetramer. Forms heterodimers with either ThiH or ThiS.

The protein resides in the cytoplasm. It carries out the reaction [ThiS sulfur-carrier protein]-C-terminal-Gly-aminoethanethioate + 2-iminoacetate + 1-deoxy-D-xylulose 5-phosphate = [ThiS sulfur-carrier protein]-C-terminal Gly-Gly + 2-[(2R,5Z)-2-carboxy-4-methylthiazol-5(2H)-ylidene]ethyl phosphate + 2 H2O + H(+). Its pathway is cofactor biosynthesis; thiamine diphosphate biosynthesis. Functionally, catalyzes the rearrangement of 1-deoxy-D-xylulose 5-phosphate (DXP) to produce the thiazole phosphate moiety of thiamine. Sulfur is provided by the thiocarboxylate moiety of the carrier protein ThiS. In vitro, sulfur can be provided by H(2)S. The chain is Thiazole synthase from Anaeromyxobacter sp. (strain Fw109-5).